Here is a 443-residue protein sequence, read N- to C-terminus: Transcriptional adapter 2-alpha (443 aa).

At Ser-6 the chain carries Phosphoserine. The ZZ-type zinc finger occupies 12–69; it reads SDKPPCRGCSSYLTEPYIKCAECGPPPFFLCLQCFTRGFEYKKHQSDHTYEIMTSDFP. Zn(2+) is bound by residues Cys-17, Cys-20, Cys-31, Cys-34, Cys-42, Cys-45, His-55, and His-59. The SANT domain occupies 70 to 122; sequence VLDPSWTAQEEMALLEAVMDCGFGNWQDVANQMCTKTKEECEKHYMKHFINNP. Glycyl lysine isopeptide (Lys-Gly) (interchain with G-Cter in SUMO2) cross-links involve residues Lys-132 and Lys-138. One can recognise an SWIRM domain in the interval 356 to 443; it reads NSGRRSAPPL…LIREGYITKA (88 aa). Residues 426-435 mediate DNA binding; sequence KTRKIYDFLI.

In terms of assembly, interacts with GCN5. Interacts with NR3C1. Associated with the P/CAF protein in the PCAF complex. Component of the PCAF complex, at least composed of TADA2L/ADA2, TADA3L/ADA3, TAF5L/PAF65-beta, TAF6L/PAF65-alpha, TAF10/TAFII30, TAF12/TAFII20, TAF9/TAFII31 and TRRAP. Component of the ADA2A-containing complex (ATAC), composed of KAT14, KAT2A, TADA2L, TADA3L, ZZ3, MBIP, WDR5, YEATS2, CCDC101 and DR1. Interacts with CCDC134.

It localises to the nucleus. The protein resides in the chromosome. Functionally, component of the ATAC complex, a complex with histone acetyltransferase activity on histones H3 and H4. Required for the function of some acidic activation domains, which activate transcription from a distant site. Binds double-stranded DNA. Binds dinucleosomes, probably at the linker region between neighboring nucleosomes. Plays a role in chromatin remodeling. May promote TP53/p53 'Lys-321' acetylation, leading to reduced TP53 stability and transcriptional activity. May also promote XRCC6 acetylation thus facilitating cell apoptosis in response to DNA damage. This chain is Transcriptional adapter 2-alpha (Tada2a), found in Mus musculus (Mouse).